The sequence spans 99 residues: UPF0473 protein LEUM_0559 (99 aa).

This sequence belongs to the UPF0473 family.

This is UPF0473 protein LEUM_0559 from Leuconostoc mesenteroides subsp. mesenteroides (strain ATCC 8293 / DSM 20343 / BCRC 11652 / CCM 1803 / JCM 6124 / NCDO 523 / NBRC 100496 / NCIMB 8023 / NCTC 12954 / NRRL B-1118 / 37Y).